Here is a 265-residue protein sequence, read N- to C-terminus: MSDLISALLLGILEGLTEFLPISSTGHLLIAEQWLGRRSDFFNIVIQAGAILAICLALRQRLWSLATGLGERANRDYVLKVGVAFLVTAVVGLIVRKAGWQLPETLQPVAWALLIGGVWMLVAEHFAGKLPERDVVTWKVAIAVGLAQVVAGVFPGTSRSASTIFIAMLLGLSKRSAAADFVFMVGIPTMFAASGYALLEMYKEGGFGTENWADVAVAFVAATITGFVVVKWLLGYIKKHRFTVFAVYRMLLGAALLLWLPAAAG.

7 helical membrane-spanning segments follow: residues 38–58, 75–95, 108–128, 135–155, 181–201, 215–235, and 244–264; these read RSDF…CLAL, RDYV…GLIV, PVAW…HFAG, VVTW…GVFP, FVFM…LLEM, VAVA…WLLG, and VFAV…PAAA.

The protein belongs to the UppP family.

It localises to the cell inner membrane. The enzyme catalyses di-trans,octa-cis-undecaprenyl diphosphate + H2O = di-trans,octa-cis-undecaprenyl phosphate + phosphate + H(+). Its function is as follows. Catalyzes the dephosphorylation of undecaprenyl diphosphate (UPP). Confers resistance to bacitracin. The protein is Undecaprenyl-diphosphatase of Xanthomonas axonopodis pv. citri (strain 306).